The primary structure comprises 196 residues: MKNILRPALVLFFVLTLLTGVAYPLAVTGAAQLLFPAQAAGSLILRDGKPVGSSLIGQNFTDPGHFWGRPSATGPMPYNASASGGSNLGPLNPALLDAVKGRIDALRAADPGNAAAVPVDLVTASASGLDPHISPAAASYQAARVARVRGLPLEKVRQLVAQETETPWLGLLGEARVHVLKLNLALDALKPVNAPG.

Residues 7–27 traverse the membrane as a helical segment; the sequence is PALVLFFVLTLLTGVAYPLAV.

This sequence belongs to the KdpC family. In terms of assembly, the system is composed of three essential subunits: KdpA, KdpB and KdpC.

The protein resides in the cell inner membrane. Its function is as follows. Part of the high-affinity ATP-driven potassium transport (or Kdp) system, which catalyzes the hydrolysis of ATP coupled with the electrogenic transport of potassium into the cytoplasm. This subunit acts as a catalytic chaperone that increases the ATP-binding affinity of the ATP-hydrolyzing subunit KdpB by the formation of a transient KdpB/KdpC/ATP ternary complex. The protein is Potassium-transporting ATPase KdpC subunit of Polaromonas naphthalenivorans (strain CJ2).